The chain runs to 225 residues: Methylthioribulose-1-phosphate dehydratase (225 aa).

2 residues coordinate Zn(2+): histidine 106 and histidine 108.

The protein belongs to the aldolase class II family. MtnB subfamily. Zn(2+) serves as cofactor.

It catalyses the reaction 5-(methylsulfanyl)-D-ribulose 1-phosphate = 5-methylsulfanyl-2,3-dioxopentyl phosphate + H2O. The protein operates within amino-acid biosynthesis; L-methionine biosynthesis via salvage pathway; L-methionine from S-methyl-5-thio-alpha-D-ribose 1-phosphate: step 2/6. In terms of biological role, catalyzes the dehydration of methylthioribulose-1-phosphate (MTRu-1-P) into 2,3-diketo-5-methylthiopentyl-1-phosphate (DK-MTP-1-P). The chain is Methylthioribulose-1-phosphate dehydratase from Xanthomonas oryzae pv. oryzae (strain PXO99A).